A 333-amino-acid polypeptide reads, in one-letter code: Holliday junction branch migration complex subunit RuvB (333 aa).

The large ATPase domain (RuvB-L) stretch occupies residues 1–182; it reads MTNRILDMEQ…FGITGHMEYY (182 aa). ATP is bound by residues Leu21, Arg22, Gly63, Lys66, Thr67, Thr68, 129–131, Arg172, Tyr182, and Arg219; that span reads EDF. Residue Thr67 coordinates Mg(2+). The small ATPAse domain (RuvB-S) stretch occupies residues 183–253; the sequence is ELADLTEIVE…ITDKALTMLD (71 aa). The interval 256-333 is head domain (RuvB-H); sequence REGLDYVDQK…EHLGYPYTEK (78 aa). DNA is bound by residues Arg292, Arg311, Arg313, and Arg316.

This sequence belongs to the RuvB family. In terms of assembly, homohexamer. Forms an RuvA(8)-RuvB(12)-Holliday junction (HJ) complex. HJ DNA is sandwiched between 2 RuvA tetramers; dsDNA enters through RuvA and exits via RuvB. An RuvB hexamer assembles on each DNA strand where it exits the tetramer. Each RuvB hexamer is contacted by two RuvA subunits (via domain III) on 2 adjacent RuvB subunits; this complex drives branch migration. In the full resolvosome a probable DNA-RuvA(4)-RuvB(12)-RuvC(2) complex forms which resolves the HJ.

It localises to the cytoplasm. The enzyme catalyses ATP + H2O = ADP + phosphate + H(+). The RuvA-RuvB-RuvC complex processes Holliday junction (HJ) DNA during genetic recombination and DNA repair, while the RuvA-RuvB complex plays an important role in the rescue of blocked DNA replication forks via replication fork reversal (RFR). RuvA specifically binds to HJ cruciform DNA, conferring on it an open structure. The RuvB hexamer acts as an ATP-dependent pump, pulling dsDNA into and through the RuvAB complex. RuvB forms 2 homohexamers on either side of HJ DNA bound by 1 or 2 RuvA tetramers; 4 subunits per hexamer contact DNA at a time. Coordinated motions by a converter formed by DNA-disengaged RuvB subunits stimulates ATP hydrolysis and nucleotide exchange. Immobilization of the converter enables RuvB to convert the ATP-contained energy into a lever motion, pulling 2 nucleotides of DNA out of the RuvA tetramer per ATP hydrolyzed, thus driving DNA branch migration. The RuvB motors rotate together with the DNA substrate, which together with the progressing nucleotide cycle form the mechanistic basis for DNA recombination by continuous HJ branch migration. Branch migration allows RuvC to scan DNA until it finds its consensus sequence, where it cleaves and resolves cruciform DNA. The chain is Holliday junction branch migration complex subunit RuvB from Streptococcus suis (strain 98HAH33).